A 73-amino-acid chain; its full sequence is Mu-sparatoxin-Hv2 (73 aa).

A signal peptide spans methionine 1–alanine 20. The propeptide occupies aspartate 21 to arginine 35. 3 cysteine pairs are disulfide-bonded: cysteine 39–cysteine 53, cysteine 46–cysteine 58, and cysteine 52–cysteine 68. Residue phenylalanine 72 is modified to Phenylalanine amide.

It belongs to the neurotoxin 10 (Hwtx-1) family. In terms of tissue distribution, expressed by the venom gland.

It is found in the secreted. Insecticidal toxin that potently and irreversibly blocks voltage-gated sodium channels (Nav) in cockroach dorsal unpaired median (DUM) neurons (IC(50)=833.7 nM). It does not change both the steady-state activation and inactivation curves, suggesting it acts as a pore blocker (possibly at Nav site 1). Does not show toxicity when intraperitoneally injected into mouse. This is Mu-sparatoxin-Hv2 from Heteropoda venatoria (Brown huntsman spider).